The chain runs to 2563 residues: Highly reducing polyketide synthase 2 (2563 aa).

A Ketosynthase family 3 (KS3) domain is found at 11 to 451 (MSDIAIVGYS…GSNSHIVLDD (441 aa)). Catalysis depends on for beta-ketoacyl synthase activity residues cysteine 182, histidine 317, and histidine 357. The Malonyl-CoA:ACP transacylase (MAT) domain maps to 589-890 (FAFTGQGAQY…DTLSEMSSAS (302 aa)). The segment at 970 to 1101 (GELLGVRVSD…ANISVEFQDN (132 aa)) is N-terminal hotdog fold. The PKS/mFAS DH domain maps to 970–1269 (GELLGVRVSD…TSAVSGGITH (300 aa)). The active-site Proton acceptor; for dehydratase activity is histidine 1002. Residues 1126–1269 (TLPIDPRVFY…TSAVSGGITH (144 aa)) form a C-terminal hotdog fold region. Aspartate 1186 serves as the catalytic Proton donor; for dehydratase activity. A methyltransferase (CMet) domain region spans residues 1296 to 1618 (FAANAVPKDD…FSGNDLVIRD (323 aa)). The Enoyl reductase (ER) domain occupies 1858–2168 (GSLDSLQFVE…QEDTSERVIV (311 aa)). The 179-residue stretch at 2192–2370 (STYLVAGGSG…ALSLDIGWMS (179 aa)) folds into the Ketoreductase (KR) domain. The region spanning 2480–2561 (SDARERQQVV…GVAEVVEARS (82 aa)) is the Carrier domain. Serine 2521 carries the post-translational modification O-(pantetheine 4'-phosphoryl)serine.

Pantetheine 4'-phosphate serves as cofactor.

The protein operates within secondary metabolite biosynthesis. Its function is as follows. Highly reducing polyketide synthase; part of the gene cluster that mediates the biosynthesis of the tetraketides fugralins such as linear fugralin A and cyclic fugralin B, volatile compounds that play a role in the asexual reproductive cycle but are not involved in pathogenicity. One of the key features of fugralins is the presence of a double methyl group, which is only rarely encountered in fungal secondary metabolites. As the fugralins cluster does not contain an independent methyltransferase, the PKS FGR1 is probably responsible for adding two methyl groups to the same carbon atom. Fugralin B is similar to fugralin A except for a cyclization between the carboxylic acid C-8 and the alcohol on C-4 resulting in a six membered lactone ring, probably catalyzed by the cyclase FGR4. The exact role of the individual cluster genes remains unknown and further work is needed to unravel the biosynthetic pathway. The protein is Highly reducing polyketide synthase 2 of Gibberella zeae (strain ATCC MYA-4620 / CBS 123657 / FGSC 9075 / NRRL 31084 / PH-1) (Wheat head blight fungus).